The following is a 310-amino-acid chain: 4-hydroxy-3-methylbut-2-enyl diphosphate reductase (310 aa).

C13 contacts [4Fe-4S] cluster. (2E)-4-hydroxy-3-methylbut-2-enyl diphosphate-binding residues include H42 and H75. H42 and H75 together coordinate dimethylallyl diphosphate. Isopentenyl diphosphate is bound by residues H42 and H75. C97 is a binding site for [4Fe-4S] cluster. Residue H125 participates in (2E)-4-hydroxy-3-methylbut-2-enyl diphosphate binding. H125 serves as a coordination point for dimethylallyl diphosphate. H125 is a binding site for isopentenyl diphosphate. The Proton donor role is filled by E127. Position 165 (T165) interacts with (2E)-4-hydroxy-3-methylbut-2-enyl diphosphate. [4Fe-4S] cluster is bound at residue C195. 4 residues coordinate (2E)-4-hydroxy-3-methylbut-2-enyl diphosphate: S223, S224, N225, and S267. The dimethylallyl diphosphate site is built by S223, S224, N225, and S267. 4 residues coordinate isopentenyl diphosphate: S223, S224, N225, and S267.

This sequence belongs to the IspH family. [4Fe-4S] cluster serves as cofactor.

It catalyses the reaction isopentenyl diphosphate + 2 oxidized [2Fe-2S]-[ferredoxin] + H2O = (2E)-4-hydroxy-3-methylbut-2-enyl diphosphate + 2 reduced [2Fe-2S]-[ferredoxin] + 2 H(+). The catalysed reaction is dimethylallyl diphosphate + 2 oxidized [2Fe-2S]-[ferredoxin] + H2O = (2E)-4-hydroxy-3-methylbut-2-enyl diphosphate + 2 reduced [2Fe-2S]-[ferredoxin] + 2 H(+). It participates in isoprenoid biosynthesis; dimethylallyl diphosphate biosynthesis; dimethylallyl diphosphate from (2E)-4-hydroxy-3-methylbutenyl diphosphate: step 1/1. The protein operates within isoprenoid biosynthesis; isopentenyl diphosphate biosynthesis via DXP pathway; isopentenyl diphosphate from 1-deoxy-D-xylulose 5-phosphate: step 6/6. In terms of biological role, catalyzes the conversion of 1-hydroxy-2-methyl-2-(E)-butenyl 4-diphosphate (HMBPP) into a mixture of isopentenyl diphosphate (IPP) and dimethylallyl diphosphate (DMAPP). Acts in the terminal step of the DOXP/MEP pathway for isoprenoid precursor biosynthesis. The sequence is that of 4-hydroxy-3-methylbut-2-enyl diphosphate reductase from Chlamydia pneumoniae (Chlamydophila pneumoniae).